A 171-amino-acid chain; its full sequence is Ribosome maturation factor RimM (171 aa).

A PRC barrel domain is found at N94–G168.

Belongs to the RimM family. In terms of assembly, binds ribosomal protein uS19.

The protein localises to the cytoplasm. An accessory protein needed during the final step in the assembly of 30S ribosomal subunit, possibly for assembly of the head region. Essential for efficient processing of 16S rRNA. May be needed both before and after RbfA during the maturation of 16S rRNA. It has affinity for free ribosomal 30S subunits but not for 70S ribosomes. This is Ribosome maturation factor RimM from Anaplasma phagocytophilum (strain HZ).